The primary structure comprises 149 residues: Large ribosomal subunit protein uL13 (149 aa).

The protein belongs to the universal ribosomal protein uL13 family. Part of the 50S ribosomal subunit.

Functionally, this protein is one of the early assembly proteins of the 50S ribosomal subunit, although it is not seen to bind rRNA by itself. It is important during the early stages of 50S assembly. The sequence is that of Large ribosomal subunit protein uL13 from Saccharolobus solfataricus (strain ATCC 35092 / DSM 1617 / JCM 11322 / P2) (Sulfolobus solfataricus).